The chain runs to 206 residues: Urease accessory protein UreG (206 aa).

Residue 13–20 (GPVGSGKT) coordinates GTP.

This sequence belongs to the SIMIBI class G3E GTPase family. UreG subfamily. As to quaternary structure, homodimer. UreD, UreF and UreG form a complex that acts as a GTP-hydrolysis-dependent molecular chaperone, activating the urease apoprotein by helping to assemble the nickel containing metallocenter of UreC. The UreE protein probably delivers the nickel.

The protein resides in the cytoplasm. Functionally, facilitates the functional incorporation of the urease nickel metallocenter. This process requires GTP hydrolysis, probably effectuated by UreG. In Haloquadratum walsbyi (strain DSM 16790 / HBSQ001), this protein is Urease accessory protein UreG.